A 178-amino-acid polypeptide reads, in one-letter code: Large ribosomal subunit protein uL6 (178 aa).

It belongs to the universal ribosomal protein uL6 family. Part of the 50S ribosomal subunit.

Its function is as follows. This protein binds to the 23S rRNA, and is important in its secondary structure. It is located near the subunit interface in the base of the L7/L12 stalk, and near the tRNA binding site of the peptidyltransferase center. The chain is Large ribosomal subunit protein uL6 from Corynebacterium aurimucosum (strain ATCC 700975 / DSM 44827 / CIP 107346 / CN-1) (Corynebacterium nigricans).